The chain runs to 137 residues: UBAP1-MVB12-associated (UMA)-domain containing protein 1 (137 aa).

Positions 1 to 72 (MFHFFRKPPE…VSDPEMENKA (72 aa)) are disordered. The span at 32–44 (DEQRMTARGKTSD) shows a compositional bias: basic and acidic residues. Positions 50–63 (PLETNKENSSSVTV) are enriched in polar residues. The UMA domain maps to 86-134 (LSDVPFTLAPHVLAVQGTITDLPDHLLSYDGSENLSRFWYDFTLENSVL).

This chain is UBAP1-MVB12-associated (UMA)-domain containing protein 1, found in Homo sapiens (Human).